The primary structure comprises 248 residues: 2,3-bisphosphoglycerate-dependent phosphoglycerate mutase (248 aa).

Residues 8–15, 21–22, R60, 87–90, K98, 114–115, and 183–184 contribute to the substrate site; these read RHGESTWN, TG, ERHY, RR, and GN. H9 functions as the Tele-phosphohistidine intermediate in the catalytic mechanism. The active-site Proton donor/acceptor is the E87.

The protein belongs to the phosphoglycerate mutase family. BPG-dependent PGAM subfamily. As to quaternary structure, homodimer.

It carries out the reaction (2R)-2-phosphoglycerate = (2R)-3-phosphoglycerate. Its pathway is carbohydrate degradation; glycolysis; pyruvate from D-glyceraldehyde 3-phosphate: step 3/5. Catalyzes the interconversion of 2-phosphoglycerate and 3-phosphoglycerate. The polypeptide is 2,3-bisphosphoglycerate-dependent phosphoglycerate mutase (Burkholderia cenocepacia (strain ATCC BAA-245 / DSM 16553 / LMG 16656 / NCTC 13227 / J2315 / CF5610) (Burkholderia cepacia (strain J2315))).